The sequence spans 210 residues: Urease accessory protein UreE (210 aa).

Positions 144-210 (PEGGAYAAGG…GHAHPHSLAR (67 aa)) are disordered. The segment covering 156–202 (HGHDHPHHDHGHDHAHAHAHGTEACDHEHSHDHDCGHHHDHGQDYGH) has biased composition (basic and acidic residues).

The protein belongs to the UreE family.

Its subcellular location is the cytoplasm. Functionally, involved in urease metallocenter assembly. Binds nickel. Probably functions as a nickel donor during metallocenter assembly. The chain is Urease accessory protein UreE from Paracidovorax citrulli (strain AAC00-1) (Acidovorax citrulli).